Consider the following 103-residue polypeptide: 11.2 kDa protein (103 aa).

The polypeptide is 11.2 kDa protein (Pseudomonas phage Pf1 (Bacteriophage Pf1)).